A 218-amino-acid chain; its full sequence is Dehydration-responsive element-binding protein 1B (218 aa).

The interval 1–26 (MEVEEAAYRTVWSEPPKRPAGRTKFR) is disordered. The AP2/ERF DNA-binding region spans 32-95 (VYRGVRRRGG…RGRAACLNFA (64 aa)). The disordered stretch occupies residues 131–151 (SAAPSSPAETFADDGDEEEDN). Positions 141-151 (FADDGDEEEDN) are enriched in acidic residues.

It belongs to the AP2/ERF transcription factor family. ERF subfamily.

It localises to the nucleus. Transcriptional activator that binds specifically to the DNA sequence 5'-[AG]CCGAC-3'. Binding to the C-repeat/DRE element mediates high salinity- and dehydration-inducible transcription. Confers resistance to high salt, cold and drought stress. The polypeptide is Dehydration-responsive element-binding protein 1B (DREB1B) (Oryza sativa subsp. indica (Rice)).